The sequence spans 494 residues: Cytochrome P450 2G1 (494 aa).

Cysteine 439 lines the heme pocket.

It belongs to the cytochrome P450 family. The cofactor is heme. As to expression, olfactory epithelium.

It is found in the endoplasmic reticulum membrane. It localises to the microsome membrane. The catalysed reaction is an organic molecule + reduced [NADPH--hemoprotein reductase] + O2 = an alcohol + oxidized [NADPH--hemoprotein reductase] + H2O + H(+). Functionally, cytochromes P450 are a group of heme-thiolate monooxygenases. This isozyme seems to be implicated in olfaction. The sequence is that of Cytochrome P450 2G1 (Cyp2g1) from Rattus norvegicus (Rat).